The primary structure comprises 158 residues: Mitotic-spindle organizing protein 2B (158 aa).

Ser-34 is modified (phosphoserine). Residues Arg-84–Thr-158 form a disordered region. Low complexity predominate over residues Gly-111–Ala-122. The segment covering Glu-128–Ala-140 has biased composition (polar residues). Position 152 is a phosphoserine (Ser-152).

Belongs to the MOZART2 family. Associates with the gamma-tubulin ring complex (gTuRC) consisting of TUBGCP2, TUBGCP3, TUBGCP4, TUBGCP5 and TUBGCP6 and gamma-tubulin TUBG1 or TUBG2; within the complex, interacts with TUBGCP2; the interaction plays a role in gTuRC activation. Interacts with TUBG1.

The protein localises to the cytoplasm. Its subcellular location is the cytoskeleton. It is found in the microtubule organizing center. It localises to the centrosome. The protein resides in the spindle. Its function is as follows. Required for the recruitment and the assembly of the gamma-tubulin ring complex (gTuRC) at the centrosome. The gTuRC regulates the minus-end nucleation of alpha-beta tubulin heterodimers that grow into microtubule protafilaments, a critical step in centrosome duplication and spindle formation. This chain is Mitotic-spindle organizing protein 2B (MZT2B), found in Homo sapiens (Human).